The primary structure comprises 84 residues: Trefoil factor 1 (84 aa).

The first 24 residues, 1–24 (MATMENKVICALVLVSMLALGTLA), serve as a signal peptide directing secretion. Residues 29–72 (ETCTVAPRERQNCGFPGVTPSQCANKGCCFDDTVRGVPWCFYPN) enclose the P-type domain. 3 disulfides stabilise this stretch: C31–C57, C41–C56, and C51–C68.

As to quaternary structure, heterodimer with GKN2; disulfide linked. Found in stomach, with highest levels in the upper gastric mucosal cells (at protein level). Detected in goblet cells of the small and large intestine and rectum, small submucosal glands in the esophagus, mucous acini of the sublingual gland, submucosal glands of the trachea, and epithelial cells lining the exocrine pancreatic ducts but not in the remainder of the pancreas (at protein level). Scattered expression is detected in the epithelial cells of the gallbladder and submucosal glands of the vagina, and weak expression is observed in the bronchial goblet cells of the pseudostratified epithelia in the respiratory system (at protein level). Detected in urine (at protein level). Strongly expressed in breast cancer but at low levels in normal mammary tissue. It is regulated by estrogen in MCF-7 cells. Strong expression found in normal gastric mucosa and in the regenerative tissues surrounding ulcerous lesions of gastrointestinal tract, but lower expression found in gastric cancer (at protein level).

Its subcellular location is the secreted. Functionally, stabilizer of the mucous gel overlying the gastrointestinal mucosa that provides a physical barrier against various noxious agents. May inhibit the growth of calcium oxalate crystals in urine. The chain is Trefoil factor 1 (TFF1) from Homo sapiens (Human).